Reading from the N-terminus, the 466-residue chain is FERM domain-containing protein 8 (466 aa).

Position 1 is an N-acetylmethionine (Met1). The interval 1 to 21 (MEGAEGNAGQPGPAERSHRSS) is disordered. Position 24 is a phosphoserine (Ser24). Residues 30-377 (ADVLVYLADD…YCIELSQAAE (348 aa)) form the FERM domain. The tract at residues 379-409 (TLSQESASGPHEAPSPSPPPTQRPKLRRQGS) is disordered. Ser384 is subject to Phosphoserine. The segment covering 391 to 400 (APSPSPPPTQ) has biased composition (pro residues). Ser409 carries the post-translational modification Phosphoserine. Thr420 carries the phosphothreonine modification. A phosphoserine mark is found at Ser440 and Ser447. Residues 442–460 (FSRQLSSSQGSYTVVQPTD) show a composition bias toward polar residues. Residues 442 to 466 (FSRQLSSSQGSYTVVQPTDDSLEQS) are disordered.

As to quaternary structure, interacts with iRhom proteins, including iRhom2/RHBDF2 (via cytoplasmic N-termini); this interaction leads to mutual protein stabilization. Interacts with LRP6; this interaction affects LRP6-binding to AXIN1. Widely expressed (at protein level).

The protein localises to the cytoplasm. The protein resides in the cytosol. It is found in the cell membrane. Its function is as follows. Promotes the cell surface stability of iRhom1/RHBDF1 and iRhom2/RHBDF2 and prevents their degradation via the endolysosomal pathway. By acting on iRhoms, involved in ADAM17-mediated shedding of TNF, amphiregulin/AREG, HBEGF and TGFA from the cell surface. Negatively regulates Wnt signaling, possibly by antagonizing the recruitment of AXIN1 to LRP6. This Mus musculus (Mouse) protein is FERM domain-containing protein 8 (Frmd8).